Reading from the N-terminus, the 110-residue chain is UPF0122 protein Aflv_1766 (110 aa).

Belongs to the UPF0122 family.

Its function is as follows. Might take part in the signal recognition particle (SRP) pathway. This is inferred from the conservation of its genetic proximity to ftsY/ffh. May be a regulatory protein. The chain is UPF0122 protein Aflv_1766 from Anoxybacillus flavithermus (strain DSM 21510 / WK1).